Consider the following 596-residue polypeptide: NADH-quinone oxidoreductase subunit C/D (596 aa).

Positions 1–186 are NADH dehydrogenase I subunit C; it reads MTDLTAQDAA…DPFELTKAKQ (186 aa). Residues 210-596 form an NADH dehydrogenase I subunit D region; sequence DFMFLNLGPN…IDFVMSDVDR (387 aa).

It in the N-terminal section; belongs to the complex I 30 kDa subunit family. In the C-terminal section; belongs to the complex I 49 kDa subunit family. In terms of assembly, NDH-1 is composed of 13 different subunits. Subunits NuoB, CD, E, F, and G constitute the peripheral sector of the complex.

It localises to the cell inner membrane. The catalysed reaction is a quinone + NADH + 5 H(+)(in) = a quinol + NAD(+) + 4 H(+)(out). NDH-1 shuttles electrons from NADH, via FMN and iron-sulfur (Fe-S) centers, to quinones in the respiratory chain. The immediate electron acceptor for the enzyme in this species is believed to be ubiquinone. Couples the redox reaction to proton translocation (for every two electrons transferred, four hydrogen ions are translocated across the cytoplasmic membrane), and thus conserves the redox energy in a proton gradient. The chain is NADH-quinone oxidoreductase subunit C/D from Salmonella choleraesuis (strain SC-B67).